The sequence spans 451 residues: Prenyltransferase asqH1 (451 aa).

The interval 14 to 37 (AEDQSTRKVHWGQEGSGQSPEARP) is disordered. Glu120 contributes to the L-tryptophan binding site. Substrate is bound by residues Arg137, Arg274, Lys276, Tyr278, and Tyr373.

It belongs to the tryptophan dimethylallyltransferase family.

The enzyme catalyses quinolinone B + dimethylallyl diphosphate = peniprequinolone + diphosphate. Its pathway is secondary metabolite biosynthesis. It participates in alkaloid biosynthesis. It functions in the pathway mycotoxin biosynthesis. Its function is as follows. Prenyltransferase; part of the gene cluster that mediates the biosynthesis of the aspoquinolone mycotoxins. Within the pathway, the prenyltransferase asqH1 catalyzes the canonical Friedel-Crafts alkylation of quinolinone B with dimethylallyl cation to yield dimethylallyl quinolone. The first step of the pathway is catalyzed by the nonribosomal peptide synthetase asqK that condenses anthranilic acid and O-methyl-L-tyrosine to produce 4'-methoxycyclopeptin. 4'-methoxycyclopeptin is then converted to 4'-methoxydehydrocyclopeptin by the ketoglutarate-dependent dioxygenase asqJ. AsqJ also converts its first product 4'-methoxydehydrocyclopeptin to 4'-methoxycyclopenin. The following conversion of 4'-methoxycyclopenin into 4'-methoxyviridicatin is catalyzed by the cyclopenase asqI. 4'-methoxyviridicatin is the precursor of quinolone natural products, and is further converted to quinolinone B. The prenyltransferase asqH1 then catalyzes the canonical Friedel-Crafts alkylation of quinolinone B with dimethylallyl cation to yield dimethylallyl quinolone, which is subjected to FAD-dependent dehydrogenation by the FAD-linked oxidoreductase asqF to yield conjugated aryl diene. The delta(3') double bond then serves as the site of the second alkylation with DMAPP catalyzed by the prenyltransferase asqH2 to yield a carbenium ion intermediate, which can be attacked by H(2)O to yield a styrenyl quinolone containing a C3'-hydroxyprenyl chain. The FAD-dependent monooxygenase asqG performs epoxidation of the terminal C7'-C8' olefin. Finally, after dehydratation of the epoxide at C3 by asqC, the quinolone epoxide rearrangement protein asqO catalyzes an enzymatic 3-exo-tet cyclization to yield the cyclopropyl-THF ring system in aspoquinolone. This is Prenyltransferase asqH1 from Emericella nidulans (strain FGSC A4 / ATCC 38163 / CBS 112.46 / NRRL 194 / M139) (Aspergillus nidulans).